Here is a 357-residue protein sequence, read N- to C-terminus: Anthranilate phosphoribosyltransferase (357 aa).

5-phospho-alpha-D-ribose 1-diphosphate-binding positions include glycine 91, glycine 94 to aspartate 95, threonine 99, asparagine 101 to threonine 104, lysine 119 to serine 127, and serine 131. An anthranilate-binding site is contributed by glycine 91. Position 103 (serine 103) interacts with Mg(2+). Position 122 (asparagine 122) interacts with anthranilate. Arginine 177 lines the anthranilate pocket. Mg(2+) is bound by residues aspartate 235 and glutamate 236.

Belongs to the anthranilate phosphoribosyltransferase family. As to quaternary structure, homodimer. It depends on Mg(2+) as a cofactor.

The catalysed reaction is N-(5-phospho-beta-D-ribosyl)anthranilate + diphosphate = 5-phospho-alpha-D-ribose 1-diphosphate + anthranilate. The protein operates within amino-acid biosynthesis; L-tryptophan biosynthesis; L-tryptophan from chorismate: step 2/5. Its function is as follows. Catalyzes the transfer of the phosphoribosyl group of 5-phosphorylribose-1-pyrophosphate (PRPP) to anthranilate to yield N-(5'-phosphoribosyl)-anthranilate (PRA). This Shewanella baltica (strain OS155 / ATCC BAA-1091) protein is Anthranilate phosphoribosyltransferase.